The chain runs to 435 residues: 3-phosphoshikimate 1-carboxyvinyltransferase (435 aa).

3 residues coordinate 3-phosphoshikimate: lysine 21, serine 22, and arginine 26. Position 21 (lysine 21) interacts with phosphoenolpyruvate. 2 residues coordinate phosphoenolpyruvate: glycine 100 and arginine 128. 3-phosphoshikimate is bound by residues serine 171, serine 172, glutamine 173, serine 199, aspartate 313, and lysine 340. Residue glutamine 173 coordinates phosphoenolpyruvate. Aspartate 313 acts as the Proton acceptor in catalysis. The phosphoenolpyruvate site is built by arginine 344, arginine 386, and lysine 412.

It belongs to the EPSP synthase family. In terms of assembly, monomer.

It localises to the cytoplasm. It catalyses the reaction 3-phosphoshikimate + phosphoenolpyruvate = 5-O-(1-carboxyvinyl)-3-phosphoshikimate + phosphate. It functions in the pathway metabolic intermediate biosynthesis; chorismate biosynthesis; chorismate from D-erythrose 4-phosphate and phosphoenolpyruvate: step 6/7. Functionally, catalyzes the transfer of the enolpyruvyl moiety of phosphoenolpyruvate (PEP) to the 5-hydroxyl of shikimate-3-phosphate (S3P) to produce enolpyruvyl shikimate-3-phosphate and inorganic phosphate. This chain is 3-phosphoshikimate 1-carboxyvinyltransferase, found in Clostridium novyi (strain NT).